We begin with the raw amino-acid sequence, 454 residues long: Ornithine aminotransferase (454 aa).

Pyridoxal 5'-phosphate-binding residues include Gly124, Thr125, and Gln267. Position 293 is an N6-(pyridoxal phosphate)lysine (Lys293). A pyridoxal 5'-phosphate-binding site is contributed by Thr321.

It belongs to the class-III pyridoxal-phosphate-dependent aminotransferase family. As to quaternary structure, homotetramer; dimer of dimers. Requires pyridoxal 5'-phosphate as cofactor.

It carries out the reaction L-ornithine + 2-oxoglutarate = L-glutamate 5-semialdehyde + L-glutamate. The catalysed reaction is L-lysine + 2-oxoglutarate = (S)-2-amino-6-oxohexanoate + L-glutamate. Catalyzes the conversion of L-ornithine and 2-oxoglutarate to L-glutamate semialdehyde and L-glutamate. L-ornithine is the best substrate, but the enzyme also shows good activity toward L-lysine, and low activity toward D-ornithine, D-lysine, 5-aminovalerate, 6-aminohexanoate and GABA. The enzyme activity is specific for 2-oxoglutarate. The chain is Ornithine aminotransferase from Pyrococcus horikoshii (strain ATCC 700860 / DSM 12428 / JCM 9974 / NBRC 100139 / OT-3).